The chain runs to 302 residues: uncharacterized protein (302 aa).

The N-terminal stretch at 1–52 (MLKKLKVVRLLVNHLIYCPSIFMPYSKNMKKKIWNKTSLGALFMLFGTALTA) is a signal peptide.

Belongs to the MG439/MG440 family.

This is an uncharacterized protein from Mycoplasma pneumoniae (strain ATCC 29342 / M129 / Subtype 1) (Mycoplasmoides pneumoniae).